A 467-amino-acid chain; its full sequence is Serine/threonine-protein kinase US3 homolog (467 aa).

Residues 64–155 (GPEVAPPART…PAGGVTREEA (92 aa)) are disordered. Residues 99-111 (NERRAATGDEKES) show a composition bias toward basic and acidic residues. Residues 117–144 (NESESESESESESESGADDGDWDDDDDA) are compositionally biased toward acidic residues. The Protein kinase domain occupies 164 to 462 (FRIIRRLTPG…AAELLEHPVF (299 aa)). ATP is bound by residues 170 to 178 (LTPGSEGRV) and lysine 194. The Proton acceptor role is filled by aspartate 279.

It belongs to the protein kinase superfamily. Ser/Thr protein kinase family. Phosphorylated by UL13 homolog; this phosphorylation regulates subsequent phosphorylation of UL31 and UL34 homologs by US3. Autophosphorylated.

It localises to the host cytoplasm. The protein localises to the host nucleus. The enzyme catalyses L-seryl-[protein] + ATP = O-phospho-L-seryl-[protein] + ADP + H(+). It catalyses the reaction L-threonyl-[protein] + ATP = O-phospho-L-threonyl-[protein] + ADP + H(+). Multifunctional serine/threonine kinase that plays a role in several processes including egress of virus particles from the nucleus, modulation of the actin cytoskeleton and inhibition of apoptosis. Phosphorylates UL31 and UL34 homologs, two critical regulators of capsid budding from nucleus to endoplasmic reticulum, thereby facilitating virion egress. Modulates and redistributes host components of the nuclear envelope, including LMNA, emerin/EMD and the nuclear matrix protein MATR3. Phosphorylates envelope glycoprotein B (gB), probably to direct it to the cell surface. Promotes virus intracellular spread by restructuring host cell cytoskeleton. Blocks host apoptosis to extend cell survival and allow efficient viral replication. Promotes viral gene expression by phosphorylating host HDAC2 to reduce viral genome silencing. This chain is Serine/threonine-protein kinase US3 homolog, found in Bos taurus (Bovine).